The primary structure comprises 586 residues: NudC domain-containing protein 1 (586 aa).

A disordered region spans residues 259–278 (KDQPESSEDEKMDEDNKREP). The CS domain maps to 275-364 (KREPLYNWHQ…EPGSTWAELV (90 aa)).

The protein localises to the cytoplasm. The protein resides in the nucleus. The sequence is that of NudC domain-containing protein 1 from Xenopus tropicalis (Western clawed frog).